Consider the following 519-residue polypeptide: Putative tyrosine carboxypeptidase MATCAP2 (519 aa).

The segment at 63–103 (SKEEKKHRSQKRFSSASSKQHRKPSKSPSSSHSKDPSRMTA) is disordered. His330 provides a ligand contact to Zn(2+). The active-site Nucleophile is the Glu331. 2 residues coordinate Zn(2+): His335 and Glu366.

It depends on Zn(2+) as a cofactor.

Functionally, putative tyrosine carboxypeptidase. The protein is Putative tyrosine carboxypeptidase MATCAP2 of Mus musculus (Mouse).